Here is a 31-residue protein sequence, read N- to C-terminus: MPTLTSYFGFLLVALTITLVLFISLSKIRLI.

The chain crosses the membrane as a helical span at residues 3–23 (TLTSYFGFLLVALTITLVLFI).

Belongs to the PetL family. As to quaternary structure, the 4 large subunits of the cytochrome b6-f complex are cytochrome b6, subunit IV (17 kDa polypeptide, PetD), cytochrome f and the Rieske protein, while the 4 small subunits are PetG, PetL, PetM and PetN. The complex functions as a dimer.

It is found in the plastid. The protein resides in the chloroplast thylakoid membrane. Functionally, component of the cytochrome b6-f complex, which mediates electron transfer between photosystem II (PSII) and photosystem I (PSI), cyclic electron flow around PSI, and state transitions. PetL is important for photoautotrophic growth as well as for electron transfer efficiency and stability of the cytochrome b6-f complex. This chain is Cytochrome b6-f complex subunit 6, found in Populus alba (White poplar).